The chain runs to 317 residues: Ret finger protein-like 3 (317 aa).

The segment at 40–82 (CPVCSDYLEKPMSLECGCTVCLKCINSLQKEPHGEDLLCCCCS) adopts an RING-type zinc-finger fold. The region spanning 107 to 301 (EPKLKKILQM…DQGVLSICPL (195 aa)) is the B30.2/SPRY domain.

As to expression, expressed during neurogenesis in differentiating human embryonic stem cells and in the developing human neocortex.

Its subcellular location is the cytoplasm. It is found in the nucleus. (Microbial infection) Stimulates the activity of Human Immunodeficiency Virus 1/HIV-1 pre-integration complex. The sequence is that of Ret finger protein-like 3 (RFPL3) from Homo sapiens (Human).